The sequence spans 81 residues: ATP synthase subunit c, chloroplastic (81 aa).

2 helical membrane-spanning segments follow: residues 4–24 and 57–77; these read VISA…SIGP and LAFM…LLFA.

The protein belongs to the ATPase C chain family. In terms of assembly, F-type ATPases have 2 components, F(1) - the catalytic core - and F(0) - the membrane proton channel. F(1) has five subunits: alpha(3), beta(3), gamma(1), delta(1), epsilon(1). F(0) has four main subunits: a(1), b(1), b'(1) and c(10-14). The alpha and beta chains form an alternating ring which encloses part of the gamma chain. F(1) is attached to F(0) by a central stalk formed by the gamma and epsilon chains, while a peripheral stalk is formed by the delta, b and b' chains.

Its subcellular location is the plastid. The protein resides in the chloroplast thylakoid membrane. F(1)F(0) ATP synthase produces ATP from ADP in the presence of a proton or sodium gradient. F-type ATPases consist of two structural domains, F(1) containing the extramembraneous catalytic core and F(0) containing the membrane proton channel, linked together by a central stalk and a peripheral stalk. During catalysis, ATP synthesis in the catalytic domain of F(1) is coupled via a rotary mechanism of the central stalk subunits to proton translocation. In terms of biological role, key component of the F(0) channel; it plays a direct role in translocation across the membrane. A homomeric c-ring of between 10-14 subunits forms the central stalk rotor element with the F(1) delta and epsilon subunits. The polypeptide is ATP synthase subunit c, chloroplastic (Zygnema circumcarinatum (Green alga)).